We begin with the raw amino-acid sequence, 607 residues long: WD repeat-containing protein 1-A (607 aa).

13 WD repeats span residues 4-45 (ELKK…IRNI), 48-87 (PAIA…IWDT), 93-135 (LLKY…LWDT), 138-176 (SVGE…FLEG), 180-218 (KFKF…LYDG), 224-263 (VCSL…IWDV), 270-306 (TTFN…YLDK), 311-351 (RPLR…YWDA), 358-408 (TFTG…KMDV), 432-474 (LKDK…LYSI), 480-518 (KDEG…VFSV), 523-561 (SEKN…VWTL), and 566-604 (TRIK…QWTV).

Belongs to the WD repeat AIP1 family.

The protein resides in the cell membrane. The protein localises to the cytoplasm. It is found in the cytoskeleton. It localises to the nucleus. Its function is as follows. Induces disassembly of actin filaments in conjunction with ADF/cofilin family proteins. Doesn't sever actin filaments alone, but caps the barbed ends of filaments severed by cofilin, which blocks annealing and depolymerization and allows more extensive severing by cofilin. This is WD repeat-containing protein 1-A (wdr1-a) from Xenopus laevis (African clawed frog).